Consider the following 355-residue polypeptide: G protein alpha i subunit (355 aa).

Gly2 carries the N-myristoyl glycine lipid modification. Residue Cys3 is the site of S-palmitoyl cysteine attachment. The G-alpha domain maps to 33 to 355; the sequence is SEVKLLLLGA…KNNLKQIGLF (323 aa). The interval 36 to 49 is G1 motif; it reads KLLLLGAGESGKST. GTP contacts are provided by residues 41–48, 176–182, 201–205, 270–273, and Ala327; these read GAGESGKS, LRTRVKT, DVGGQ, and NKKD. Ser48 and Thr182 together coordinate Mg(2+). Positions 174–182 are G2 motif; the sequence is DVLRTRVKT. The tract at residues 197–206 is G3 motif; sequence FKLFDVGGQR. The interval 266-273 is G4 motif; that stretch reads ILFLNKKD. Positions 325–330 are G5 motif; that stretch reads TCATDT.

Belongs to the G-alpha family. G(i/o/t/z) subfamily. In terms of assembly, g proteins are composed of 3 units; alpha, beta and gamma. The alpha chain contains the guanine nucleotide binding site. Interacts (via GDP- or GTP-bound forms) with loco (via GoLoco and RGS domains). Interacts with raps/pins.

The protein resides in the cell membrane. It is found in the apical cell membrane. Guanine nucleotide-binding proteins (G proteins) are involved as modulators or transducers in various transmembrane signaling systems. Plays a role in glial cell differentiation during embryogenesis; loco, Galphao and the G-protein coupled receptor, moody, are required in the surface glia to achieve effective insulation of the nerve cord. The sequence is that of G protein alpha i subunit (Galphai) from Drosophila melanogaster (Fruit fly).